A 249-amino-acid chain; its full sequence is tRNA uridine(34) hydroxylase (249 aa).

Residues 124–218 (TKQDVIVIDT…YLEDTQNKNN (95 aa)) form the Rhodanese domain. The active-site Cysteine persulfide intermediate is Cys178.

The protein belongs to the TrhO family.

It carries out the reaction uridine(34) in tRNA + AH2 + O2 = 5-hydroxyuridine(34) in tRNA + A + H2O. Its function is as follows. Catalyzes oxygen-dependent 5-hydroxyuridine (ho5U) modification at position 34 in tRNAs. In Rickettsia canadensis (strain McKiel), this protein is tRNA uridine(34) hydroxylase.